A 235-amino-acid chain; its full sequence is Acyl-protein thioesterase 1 (235 aa).

Residues S119, D172, and H206 each act as charge relay system in the active site.

Belongs to the AB hydrolase superfamily. AB hydrolase 2 family.

The protein resides in the cytoplasm. Its subcellular location is the nucleus. It catalyses the reaction S-hexadecanoyl-L-cysteinyl-[protein] + H2O = L-cysteinyl-[protein] + hexadecanoate + H(+). In terms of biological role, hydrolyzes fatty acids from S-acylated cysteine residues in proteins with a strong preference for palmitoylated G-alpha proteins over other acyl substrates. Mediates the deacylation of G-alpha proteins such as GPA1 in vivo, but has weak or no activity toward palmitoylated Ras proteins. Has weak lysophospholipase activity in vitro; however such activity may not exist in vivo. This is Acyl-protein thioesterase 1 from Eremothecium gossypii (strain ATCC 10895 / CBS 109.51 / FGSC 9923 / NRRL Y-1056) (Yeast).